The chain runs to 237 residues: Methylosome subunit pICln (237 aa).

Serine 2 is subject to N-acetylserine. Residues serine 102, serine 144, serine 193, serine 195, serine 198, and serine 210 each carry the phosphoserine modification. Residues 135–159 (LHPDPEDEDSDDYDGEEYDVEAHEQ) are disordered. Residues 139 to 153 (PEDEDSDDYDGEEYD) are compositionally biased toward acidic residues. Threonine 223 carries the phosphothreonine modification.

Belongs to the pICln (TC 1.A.47) family. Component of the methylosome, a 20S complex containing at least PRMT5/SKB1, WDR77/MEP50 and CLNS1A/pICln. May mediate SNRPD1 and SNRPD3 methylation. Forms a 6S pICln-Sm complex composed of CLNS1A/pICln, SNRPD1, SNRPD2, SNRPE, SNRPF and SNRPG; ring-like structure where CLNS1A/pICln mimics additional Sm proteins and which is unable to assemble into the core snRNP. Interacts with LSM10 and LSM11.

The protein localises to the cytoplasm. The protein resides in the cytosol. It localises to the nucleus. Its subcellular location is the cytoskeleton. Its function is as follows. Involved in both the assembly of spliceosomal snRNPs and the methylation of Sm proteins. Chaperone that regulates the assembly of spliceosomal U1, U2, U4 and U5 small nuclear ribonucleoproteins (snRNPs), the building blocks of the spliceosome, and thereby plays an important role in the splicing of cellular pre-mRNAs. Most spliceosomal snRNPs contain a common set of Sm proteins SNRPB, SNRPD1, SNRPD2, SNRPD3, SNRPE, SNRPF and SNRPG that assemble in a heptameric protein ring on the Sm site of the small nuclear RNA to form the core snRNP (Sm core). In the cytosol, the Sm proteins SNRPD1, SNRPD2, SNRPE, SNRPF and SNRPG are trapped in an inactive 6S pICln-Sm complex by the chaperone CLNS1A that controls the assembly of the core snRNP. Dissociation by the SMN complex of CLNS1A from the trapped Sm proteins and their transfer to an SMN-Sm complex triggers the assembly of core snRNPs and their transport to the nucleus. The polypeptide is Methylosome subunit pICln (CLNS1A) (Homo sapiens (Human)).